Here is a 372-residue protein sequence, read N- to C-terminus: MKLLSLHVQDFRNLAAVELAPSPRATVLLGENGQGKTNLLEAIYFLTTLKPLRAVRLAELVRFGAADAAVAGDFEGPGGVRRVAVQVAAGGRTASLDGKALGSGARLDDYFEGLASVCFSPDDLLLVKAGPDGRRRFLDRAAFNRWPAVLGEAREYVRALRARNAALRSGTAEVEASFREPLVRAGARLLVRRRDLVAELAPRLRAAFAEISGPAAPEADLAYRAAGGVEVGHPEAEVAARLARALETRLERDREKGFTSAGPHMDDLVLALGGKGARLYGSQGQQRALVLALKIAEIENLRAALGRPPLLLLDDVSSELDPAKNRFLLGYLAALPAQAFLTTTDRRLIEPAAGPDTAFYEVRSGVVSPLVS.

30-37 lines the ATP pocket; the sequence is GENGQGKT.

Belongs to the RecF family.

It localises to the cytoplasm. The RecF protein is involved in DNA metabolism; it is required for DNA replication and normal SOS inducibility. RecF binds preferentially to single-stranded, linear DNA. It also seems to bind ATP. The sequence is that of DNA replication and repair protein RecF from Anaeromyxobacter dehalogenans (strain 2CP-C).